The following is an 86-amino-acid chain: Small ribosomal subunit protein bS20 (86 aa).

The segment at 1–27 (MANSKSAKKRAIQAEKRRQHNASRRSM) is disordered.

It belongs to the bacterial ribosomal protein bS20 family.

Binds directly to 16S ribosomal RNA. The sequence is that of Small ribosomal subunit protein bS20 from Vibrio atlanticus (strain LGP32) (Vibrio splendidus (strain Mel32)).